Reading from the N-terminus, the 573-residue chain is Methionine--tRNA ligase (573 aa).

A 'HIGH' region motif is present at residues 11-21 (PYINGIKHLGN). The Zn(2+) site is built by Cys-143, Cys-146, Cys-156, and Cys-159. The 'KMSKS' region motif lies at 346-350 (QFSTS). Thr-349 is an ATP binding site.

This sequence belongs to the class-I aminoacyl-tRNA synthetase family. MetG type 1 subfamily. In terms of assembly, monomer. The cofactor is Zn(2+).

The protein resides in the cytoplasm. The enzyme catalyses tRNA(Met) + L-methionine + ATP = L-methionyl-tRNA(Met) + AMP + diphosphate. Functionally, is required not only for elongation of protein synthesis but also for the initiation of all mRNA translation through initiator tRNA(fMet) aminoacylation. The sequence is that of Methionine--tRNA ligase from Ruegeria sp. (strain TM1040) (Silicibacter sp.).